The primary structure comprises 91 residues: MTDVLVVLKVFPDSDEVNLDNLYTDISSKLPKEYKIIRKETEPIAFGLNALILYVQMPEQTEGGTDNLEEVVNNIQGVSHAEVVGITRLGF.

Homodimer.

Its function is as follows. Promotes the exchange of GDP for GTP in EF-1-alpha/GDP, thus allowing the regeneration of EF-1-alpha/GTP that could then be used to form the ternary complex EF-1-alpha/GTP/AAtRNA. The protein is Elongation factor 1-beta (ef1b) of Saccharolobus solfataricus (strain ATCC 35092 / DSM 1617 / JCM 11322 / P2) (Sulfolobus solfataricus).